The sequence spans 189 residues: H/ACA ribonucleoprotein complex subunit 1-like protein 2 (189 aa).

Gly residues predominate over residues 1-12 (MRPPRGGGSFRG). Disordered regions lie at residues 1–39 (MRPPRGGGSFRGRGGRDNGGRGRGRGRGRGRFGGGNYDE) and 129–189 (RFLP…RGRA). A compositionally biased stretch (low complexity) spans 162–177 (GRGAPRGASRGFQPRG).

It belongs to the GAR1 family. In terms of assembly, component of the small nucleolar ribonucleoprotein particle containing H/ACA-type snoRNAs (H/ACA snoRNPs).

It localises to the nucleus. It is found in the nucleolus. In terms of biological role, required for ribosome biogenesis. Part of a complex which catalyzes pseudouridylation of rRNA. This involves the isomerization of uridine such that the ribose is subsequently attached to C5, instead of the normal N1. Pseudouridine ('psi') residues may serve to stabilize the conformation of rRNAs. The chain is H/ACA ribonucleoprotein complex subunit 1-like protein 2 from Arabidopsis thaliana (Mouse-ear cress).